A 2493-amino-acid chain; its full sequence is Non-reducing polyketide synthase pkiA (2493 aa).

Residues proline 129–isoleucine 243 form an N-terminal acylcarrier protein transacylase domain (SAT) region. The active-site Nucleophile; for transacylase activity is the cysteine 160. Catalysis depends on histidine 274, which acts as the Proton donor/acceptor; for transacylase activity. In terms of domain architecture, Ketosynthase family 3 (KS3) spans glutamate 401 to glutamine 818. Residues cysteine 567, histidine 702, and histidine 741 each act as for beta-ketoacyl synthase activity in the active site. The malonyl-CoA:ACP transacylase (MAT) stretch occupies residues cysteine 926–tyrosine 1261. The tract at residues proline 1259–cysteine 1387 is N-terminal hotdog fold. One can recognise a PKS/mFAS DH domain in the interval proline 1259–threonine 1562. Histidine 1291 functions as the Proton acceptor; for dehydratase activity in the catalytic mechanism. A product template (PT) domain region spans residues alanine 1297–lysine 1558. The tract at residues valine 1415–threonine 1562 is C-terminal hotdog fold. The Proton donor; for dehydratase activity role is filled by aspartate 1471. One can recognise a Carrier domain in the interval lysine 1588–leucine 1662. O-(pantetheine 4'-phosphoryl)serine is present on serine 1622. Positions arginine 1822 to glutamate 2063 are methyltransferase (CMeT) domain. The segment at valine 2128 to isoleucine 2366 is NADPH-binding domain.

Pantetheine 4'-phosphate is required as a cofactor.

It catalyses the reaction decanoyl-[ACP] + 4 malonyl-CoA + AH2 + S-adenosyl-L-methionine + 3 H(+) = 2,4-dihydroxy-3-methyl-6-(2-oxoundecyl)benzaldehyde + holo-[ACP] + A + S-adenosyl-L-homocysteine + 4 CO2 + 4 CoA + H2O. It participates in secondary metabolite biosynthesis. Its function is as follows. Non-reducing polyketide synthase; part of the pki gene cluster that mediates the biosynthesis of 2,4-dihydroxy-3-methyl-6-(2-oxoundecyl)benzaldehyde. The first step in the pathway is the generation of the decanoyl starter unit by the FAS composed of subunits pkiB and pkiC, which is then transferred directly from the FAS to the SAT domain of the non-reducing polyketide synthase pkiA. PkiA condenses the decanoyyl starter unit with 4 malonyl-CoA units and performs one methylation step to yield 2,4-dihydroxy-3-methyl-6-(2-oxoundecyl)benzaldehyde. The polypeptide is Non-reducing polyketide synthase pkiA (Emericella nidulans (strain FGSC A4 / ATCC 38163 / CBS 112.46 / NRRL 194 / M139) (Aspergillus nidulans)).